The chain runs to 459 residues: Zinc finger protein 213 (459 aa).

One can recognise an SCAN box domain in the interval 45-126 (RQRFRQFCYG…VALVEDLQKQ (82 aa)). The tract at residues 128–188 (VKAWRQDVPS…ALLKEGRPGE (61 aa)) is disordered. One can recognise a KRAB domain in the interval 202–292 (VALGDIPFYF…ENRPRAALGP (91 aa)). C2H2-type zinc fingers lie at residues 317–339 (HSCG…QRTH), 345–367 (HKCP…QGVH), 373–395 (FSCS…QRIH), 401–423 (FGCS…RRVH), and 429–451 (FGCG…QSLH).

This sequence belongs to the krueppel C2H2-type zinc-finger protein family. In terms of tissue distribution, widely expressed with highest levels in testis.

The protein localises to the nucleus. In terms of biological role, may be involved in transcriptional regulation. The chain is Zinc finger protein 213 (ZNF213) from Homo sapiens (Human).